Reading from the N-terminus, the 379-residue chain is Alcohol dehydrogenase class-P (379 aa).

N-acetylserine is present on serine 2. Cysteine 47 is a binding site for Zn(2+). Residue threonine 49 coordinates an alcohol. Position 49 (threonine 49) interacts with NAD(+). 8 residues coordinate Zn(2+): aspartate 50, histidine 69, glutamate 70, cysteine 99, cysteine 102, cysteine 105, cysteine 113, and cysteine 177. Position 69 (histidine 69) interacts with an alcohol. Residues valine 206 and aspartate 226 each contribute to the NAD(+) site. Residue serine 229 is modified to Phosphoserine. NAD(+) is bound by residues arginine 231, threonine 272, valine 295, valine 297, threonine 320, phenylalanine 322, and arginine 372.

This sequence belongs to the zinc-containing alcohol dehydrogenase family. Class-P subfamily. As to quaternary structure, homodimer. Zn(2+) is required as a cofactor. In terms of processing, glutathionylated. As to expression, root specific. Also detected in etiolated seedlings and leaves in cold conditions.

It is found in the cytoplasm. The enzyme catalyses a primary alcohol + NAD(+) = an aldehyde + NADH + H(+). The catalysed reaction is a secondary alcohol + NAD(+) = a ketone + NADH + H(+). It carries out the reaction ethanol + NAD(+) = acetaldehyde + NADH + H(+). Alcohol dehydrogenase activity show inverse correlation with the decreasing availability of oxygen. Slightly repressed by thiol-modifying agents N-ethylmaleimide (NEM) and 5,5-dithio-bis-(2-nitrobenzoic acid) (DTNB), as well as by methyl methanethiosulfonate (MMTS) in a dose-dependent manner. Inhibited by hydrogen peroxide H(2)O(2). Functionally, alcohol dehydrogenase catalyzing the reduction of toxic aldehydes to the corresponding alcohols. Mostly active on ethanol (EtOH), but exhibits broad substrate selectivity for primary and secondary alcohols (e.g. cinnamyl alcohol, octanol, geraniol, butanol, propyl alcohol, pentanol, isopentanol, ethylene glycol, isopropanol, methanol and tertiary butyl alcohol). Also catalyzes the reverse reaction to convert allyl alcohol to highly toxic acryl-aldehyde. Required for survival and acclimation in hypoxic conditions, especially in roots. Not able to catalyze NADH-dependent degradation of S-nitrosoglutathione (GSNO). In Arabidopsis thaliana (Mouse-ear cress), this protein is Alcohol dehydrogenase class-P.